Reading from the N-terminus, the 376-residue chain is Cyclin-dependent kinase 9-B (376 aa).

One can recognise a Protein kinase domain in the interval 19–319 (YERLAKIGQG…SDEALNHDFF (301 aa)). Residues 25–33 (IGQGTFGEV) and K48 each bind ATP. The Proton acceptor role is filled by D153. The tract at residues 345–376 (PPRRRGGHMPQQPANQARNPAATNQSEFDRVF) is disordered. The segment covering 354–369 (PQQPANQARNPAATNQ) has biased composition (low complexity).

Belongs to the protein kinase superfamily. CMGC Ser/Thr protein kinase family. CDC2/CDKX subfamily. Associates with cyclin-T to form P-TEFb.

The protein resides in the nucleus. It catalyses the reaction L-seryl-[protein] + ATP = O-phospho-L-seryl-[protein] + ADP + H(+). It carries out the reaction L-threonyl-[protein] + ATP = O-phospho-L-threonyl-[protein] + ADP + H(+). The catalysed reaction is [DNA-directed RNA polymerase] + ATP = phospho-[DNA-directed RNA polymerase] + ADP + H(+). Member of the cyclin-dependent kinase pair (CDK9/cyclin-T) complex, also called positive transcription elongation factor B (P-TEFb), which is proposed to facilitate the transition from abortive to production elongation by phosphorylating the CTD (C-terminal domain) of the large subunit of RNA polymerase II (RNAP II) and SUPT5H. This Xenopus laevis (African clawed frog) protein is Cyclin-dependent kinase 9-B (cdk9-b).